The primary structure comprises 130 residues: uncharacterized protein (130 aa).

A helical transmembrane segment spans residues valine 21 to isoleucine 43.

Its subcellular location is the membrane. This is an uncharacterized protein from Saccharomyces cerevisiae (strain ATCC 204508 / S288c) (Baker's yeast).